A 332-amino-acid polypeptide reads, in one-letter code: Gibberellin 2-beta-dioxygenase (332 aa).

Residues 175–280 (KSDSCFRLNH…RLSMIYFGGP (106 aa)) form the Fe2OG dioxygenase domain. Fe cation-binding residues include histidine 204, aspartate 206, and histidine 261. Arginine 271 is a catalytic residue.

It belongs to the iron/ascorbate-dependent oxidoreductase family. GA2OX subfamily. Fe cation is required as a cofactor.

The enzyme catalyses gibberellin A1 + 2-oxoglutarate + O2 = gibberellin A8 + succinate + CO2. Its pathway is plant hormone biosynthesis; gibberellin biosynthesis. Catalyzes the 2-beta-hydroxylation of several biologically active gibberellins, leading to the homeostatic regulation of their endogenous level. Catabolism of gibberellins (GAs) plays a central role in plant development. Converts GA9/GA20 to GA51/GA29 and GA4/GA1 to GA34/GA8. In Phaseolus coccineus (Scarlet runner bean), this protein is Gibberellin 2-beta-dioxygenase (GA2OX1).